We begin with the raw amino-acid sequence, 428 residues long: Elongation factor 1-alpha (428 aa).

Positions 5–217 constitute a tr-type G domain; that stretch reads KPHVNIVFIG…DQIPEPEKPI (213 aa). Residues 14–21 form a G1 region; it reads GHVDHGKS. 14 to 21 is a binding site for GTP; sequence GHVDHGKS. Ser21 contributes to the Mg(2+) binding site. Residues 68-72 are G2; sequence GITID. Residues 89–92 form a G3 region; that stretch reads DAPG. GTP contacts are provided by residues 89-93 and 144-147; these read DAPGH and NKMD. Residues 144 to 147 form a G4 region; the sequence is NKMD. A G5 region spans residues 181-183; it reads SAW.

It belongs to the TRAFAC class translation factor GTPase superfamily. Classic translation factor GTPase family. EF-Tu/EF-1A subfamily.

The protein localises to the cytoplasm. The catalysed reaction is GTP + H2O = GDP + phosphate + H(+). Functionally, GTP hydrolase that promotes the GTP-dependent binding of aminoacyl-tRNA to the A-site of ribosomes during protein biosynthesis. This is Elongation factor 1-alpha from Pyrococcus horikoshii (strain ATCC 700860 / DSM 12428 / JCM 9974 / NBRC 100139 / OT-3).